The following is a 238-amino-acid chain: Purine nucleoside phosphorylase DeoD-type (238 aa).

H5 serves as a coordination point for a purine D-ribonucleoside. Phosphate is bound by residues G21, R25, R44, and 88-91; that span reads RIGT. Residues 180–182 and 204–205 contribute to the a purine D-ribonucleoside site; these read DME and SD. The active-site Proton donor is D205.

Belongs to the PNP/UDP phosphorylase family. As to quaternary structure, homohexamer; trimer of homodimers.

It carries out the reaction a purine D-ribonucleoside + phosphate = a purine nucleobase + alpha-D-ribose 1-phosphate. It catalyses the reaction a purine 2'-deoxy-D-ribonucleoside + phosphate = a purine nucleobase + 2-deoxy-alpha-D-ribose 1-phosphate. Catalyzes the reversible phosphorolytic breakdown of the N-glycosidic bond in the beta-(deoxy)ribonucleoside molecules, with the formation of the corresponding free purine bases and pentose-1-phosphate. The polypeptide is Purine nucleoside phosphorylase DeoD-type (Buchnera aphidicola subsp. Baizongia pistaciae (strain Bp)).